The following is a 291-amino-acid chain: 4-hydroxy-tetrahydrodipicolinate synthase (291 aa).

Position 47 (Thr47) interacts with pyruvate. Tyr136 functions as the Proton donor/acceptor in the catalytic mechanism. Lys164 serves as the catalytic Schiff-base intermediate with substrate. Ile206 lines the pyruvate pocket.

It belongs to the DapA family. In terms of assembly, homotetramer; dimer of dimers.

The protein resides in the cytoplasm. It carries out the reaction L-aspartate 4-semialdehyde + pyruvate = (2S,4S)-4-hydroxy-2,3,4,5-tetrahydrodipicolinate + H2O + H(+). The protein operates within amino-acid biosynthesis; L-lysine biosynthesis via DAP pathway; (S)-tetrahydrodipicolinate from L-aspartate: step 3/4. Its function is as follows. Catalyzes the condensation of (S)-aspartate-beta-semialdehyde [(S)-ASA] and pyruvate to 4-hydroxy-tetrahydrodipicolinate (HTPA). The polypeptide is 4-hydroxy-tetrahydrodipicolinate synthase (Leuconostoc citreum (strain KM20)).